Here is a 99-residue protein sequence, read N- to C-terminus: Large ribosomal subunit protein bL21 (99 aa).

The protein belongs to the bacterial ribosomal protein bL21 family. As to quaternary structure, part of the 50S ribosomal subunit. Contacts protein L20.

This protein binds to 23S rRNA in the presence of protein L20. This Acholeplasma laidlawii (strain PG-8A) protein is Large ribosomal subunit protein bL21.